We begin with the raw amino-acid sequence, 283 residues long: Prolyl 4-hydroxylase 1 (283 aa).

At 1–6 (MAPAMK) the chain is on the cytoplasmic side. Residues 7–27 (IVFGLLTFVTVGMVIGSLLQL) form a helical; Signal-anchor for type II membrane protein membrane-spanning segment. Residues 28–283 (AFINRLEDSY…TKWMRQKATS (256 aa)) are Lumenal-facing. Residues 162 to 279 (NGELIQVLRY…KWSATKWMRQ (118 aa)) form the Fe2OG dioxygenase domain. His-180, Asp-182, and His-260 together coordinate Fe cation. Lys-270 is a binding site for 2-oxoglutarate.

Belongs to the P4HA family. The cofactor is Fe(2+). L-ascorbate is required as a cofactor.

It localises to the endoplasmic reticulum membrane. It carries out the reaction L-prolyl-[collagen] + 2-oxoglutarate + O2 = trans-4-hydroxy-L-prolyl-[collagen] + succinate + CO2. Its function is as follows. Catalyzes the post-translational formation of 4-hydroxyproline in -Xaa-Pro-Gly- sequences in proline-rich peptide sequences of plant glycoproteins and other proteins. Hydroxylates preferentially prolines in second positions in the -Pro-Pro-Gly-triplets. Hydroxyprolines are important constituent of many plant cell wall glycoproteins such as extensins, hydroxyproline-rich glycoproteins, lectins and arabinogalactan proteins. Can hydroxylate collagen-like peptides and hypoxia-inducible transcription factor peptides. In Arabidopsis thaliana (Mouse-ear cress), this protein is Prolyl 4-hydroxylase 1.